The primary structure comprises 57 residues: Small ribosomal subunit protein eS27 (57 aa).

Zn(2+)-binding residues include Cys-10, Cys-13, Cys-29, and Cys-32. Residues 10–32 (CPDCENEQTVFGKASTEVACAVC) form a C4-type zinc finger.

Belongs to the eukaryotic ribosomal protein eS27 family. Part of the 30S ribosomal subunit. Zn(2+) serves as cofactor.

This is Small ribosomal subunit protein eS27 from Halobacterium salinarum (strain ATCC 29341 / DSM 671 / R1).